We begin with the raw amino-acid sequence, 823 residues long: Leucine--tRNA ligase (823 aa).

The short motif at 42-52 (PYPSGTLHMGH) is the 'HIGH' region element. The short motif at 575-579 (KMSKS) is the 'KMSKS' region element. ATP is bound at residue K578.

The protein belongs to the class-I aminoacyl-tRNA synthetase family.

The protein resides in the cytoplasm. It carries out the reaction tRNA(Leu) + L-leucine + ATP = L-leucyl-tRNA(Leu) + AMP + diphosphate. The polypeptide is Leucine--tRNA ligase (Legionella pneumophila (strain Paris)).